Here is a 627-residue protein sequence, read N- to C-terminus: Anti-CBASS protein Acb1 (627 aa).

Residue Y105 participates in 3',3'-cGAMP binding. Residue Y105 participates in 3',3'-cUAMP binding. The interval 437–474 is disordered; it reads LADQPETESANENTEQPESGEEGEEGQPTRRAANDAKP. Residues H508, T510, H584, and T586 contribute to the active site. Positions 614 and 620 each coordinate 3',3'-cGAMP. The 3',3'-cUAMP site is built by E614 and W620.

It belongs to the anti-CBASS protein Acb1 family.

The enzyme catalyses 3',3'-cUAMP + H2O = U[3'-5']pAp[3'] + H(+). It carries out the reaction 3',3',3'-c-tri-AMP + H2O = A[3'-5']pA[3'-5']pAp[3'] + H(+). It catalyses the reaction 3',3',3'-cAAG + H2O = G[3'-5']pA[3'-5']pAp[3'] + H(+). The catalysed reaction is 3',3',3'-cAAG + H2O = A[3'-5']pG[3'-5']pAp[3'] + H(+). The enzyme catalyses 3',3'-cGAMP + H2O = G[3'-5']pAp[3'] + H(+). Functionally, counteracts or regulates the endogenous CBASS antiviral defense system. Phosphodiesterase that enables metal-independent hydrolysis of the host cyclic di- and trinucleotide CBASS signals such as 3'3'-cGAMP, 3'3'cUA, and 3'3'3'-cAAA. The protein is Anti-CBASS protein Acb1 of Caulobacter sp. (strain RHG1).